The chain runs to 130 residues: Small ribosomal subunit protein uS11 (130 aa).

The protein belongs to the universal ribosomal protein uS11 family. As to quaternary structure, part of the 30S ribosomal subunit. Interacts with proteins S7 and S18. Binds to IF-3.

Located on the platform of the 30S subunit, it bridges several disparate RNA helices of the 16S rRNA. Forms part of the Shine-Dalgarno cleft in the 70S ribosome. The polypeptide is Small ribosomal subunit protein uS11 (Syntrophomonas wolfei subsp. wolfei (strain DSM 2245B / Goettingen)).